Here is a 1722-residue protein sequence, read N- to C-terminus: Signal-induced proliferation-associated 1-like protein 2 (1722 aa).

Disordered regions lie at residues 1-29 and 44-72; these read MSDP…RTMQ and SMGP…TPAV. Residues 57-66 show a composition bias toward gly residues; the sequence is EGGGGGGGPA. Residues S149, S380, and S384 each carry the phosphoserine modification. A disordered region spans residues 362 to 405; the sequence is ASAASQTPVPVGPAGGCESPLGSKEDLNSKENPDADEGDGKSND. Over residues 384–403 the composition is skewed to basic and acidic residues; the sequence is SKEDLNSKENPDADEGDGKS. The Rap-GAP domain occupies 596–813; that stretch reads LLKLDEQGLS…RTRQEYLKDL (218 aa). One can recognise a PDZ domain in the interval 951–1027; sequence EMTLRRNGLG…VKVVIIQPHE (77 aa). Phosphoserine is present on S1030. Disordered stretches follow at residues 1068-1246 and 1331-1360; these read HRVP…FGSG and GSMG…SKST. Low complexity-rich tracts occupy residues 1091 to 1103 and 1120 to 1131; these read LQCQ…AQAA and SSPSNQSSSSDP. Residues 1195–1218 show a composition bias toward basic and acidic residues; it reads YKERVLQKDGSCKESPNKLSHIGD. Residues 1220–1237 are compositionally biased toward low complexity; that stretch reads SCSSHSSSNTLSSNTSSN. The residue at position 1245 (S1245) is a Phosphoserine. Over residues 1331–1355 the composition is skewed to low complexity; it reads GSMGDLSEVSSHSSGSQHSGSPSAH. 7 positions are modified to phosphoserine: S1461, S1472, S1478, S1488, S1549, S1552, and S1591. Residues 1652-1712 adopt a coiled-coil conformation; that stretch reads STLTGKVNQL…ATAQLRKFTE (61 aa).

In Mus musculus (Mouse), this protein is Signal-induced proliferation-associated 1-like protein 2 (Sipa1l2).